A 333-amino-acid polypeptide reads, in one-letter code: Adenosine deaminase (333 aa).

Zn(2+) is bound by residues histidine 12 and histidine 14. The substrate site is built by histidine 14 and aspartate 16. Pentostatin-binding positions include histidine 14–aspartate 16, serine 141, and glycine 170. Glycine 170 contributes to the substrate binding site. Position 197 (histidine 197) interacts with Zn(2+). 3 residues coordinate pentostatin: glutamate 200, histidine 221, and aspartate 278. Catalysis depends on glutamate 200, which acts as the Proton donor. Residue aspartate 278 coordinates Zn(2+). Aspartate 279 serves as a coordination point for substrate.

The protein belongs to the metallo-dependent hydrolases superfamily. Adenosine and AMP deaminases family. Adenosine deaminase subfamily. It depends on Zn(2+) as a cofactor.

The enzyme catalyses adenosine + H2O + H(+) = inosine + NH4(+). It carries out the reaction 2'-deoxyadenosine + H2O + H(+) = 2'-deoxyinosine + NH4(+). In terms of biological role, catalyzes the hydrolytic deamination of adenosine and 2-deoxyadenosine. The protein is Adenosine deaminase of Salmonella typhimurium (strain LT2 / SGSC1412 / ATCC 700720).